The following is an 863-amino-acid chain: Linoleate 9S-lipoxygenase 1 (863 aa).

One can recognise a PLAT domain in the interval 32–158 (RDFTASLLDN…KYHYNRIFFA (127 aa)). In terms of domain architecture, Lipoxygenase spans 161 to 863 (SYLPSQMPEA…ARGIPNSISI (703 aa)). The tract at residues 204 to 244 (NDLGEPDRDNPRPVLGGSQKHPYPRRGRTGRIPTKKDPNSE) is disordered. Fe cation-binding residues include H518, H523, H709, N713, and I863.

It belongs to the lipoxygenase family. As to quaternary structure, monomer. Fe cation serves as cofactor.

It localises to the cytoplasm. The catalysed reaction is (9Z,12Z)-octadecadienoate + O2 = (9S)-hydroperoxy-(10E,12Z)-octadecadienoate. The protein operates within lipid metabolism; oxylipin biosynthesis. Functionally, plant lipoxygenase may be involved in a number of diverse aspects of plant physiology including growth and development, pest resistance, and senescence or responses to wounding. This lipoxygenase introduces molecular oxygen exclusively into the C-9 position of linoleic and linolenic. This Oryza sativa subsp. japonica (Rice) protein is Linoleate 9S-lipoxygenase 1.